We begin with the raw amino-acid sequence, 333 residues long: Taste receptor type 2 member 123 (333 aa).

Topologically, residues 1-13 (MFSQKINYSHLFT) are extracellular. A glycan (N-linked (GlcNAc...) asparagine) is linked at asparagine 7. A helical membrane pass occupies residues 14 to 34 (FSITLYVEIVTGILGHGFIAL). The Cytoplasmic segment spans residues 35–60 (VNIMDWVKRRRISSVDQILTALALTR). Residues 61-81 (FIYVLSMLICILLFMLCPHLP) form a helical membrane-spanning segment. At 82-90 (RRSEMLSAM) the chain is on the extracellular side. A helical membrane pass occupies residues 91 to 111 (GIFWVVNSHFSIWLTTCLGVF). Residues 112–134 (YFLKIANFSNSFFLYLKWRVKKV) lie on the Cytoplasmic side of the membrane. A helical membrane pass occupies residues 135–155 (ILIIILASLIFLTLHILSLGI). Residues 156–205 (YDQFSIAAYVGNMSYSLTDLTQFSSTFLFSNSSNVFLITNSSHVFLPINS) lie on the Extracellular side of the membrane. N-linked (GlcNAc...) asparagine glycosylation is found at asparagine 167, asparagine 186, and asparagine 195. The chain crosses the membrane as a helical span at residues 206 to 226 (LFMLIPFTVSLVAFLMLIFSL). Over 227–253 (WKHHKKMQVNAKQPRDVSTMAHIKALQ) the chain is Cytoplasmic. The chain crosses the membrane as a helical span at residues 254–274 (TVFSFLLLYAIYLLFLIIGIL). Topologically, residues 275–281 (NLGLMEK) are extracellular. Residues 282–302 (IVILIFDHISGAVFPISHSFV) traverse the membrane as a helical segment. The Cytoplasmic segment spans residues 303 to 333 (LILGNSKLRQASLSVLPCLRCQSKDMDTMGL).

This sequence belongs to the G-protein coupled receptor T2R family. Expressed in subsets of taste receptor cells of the tongue and palate epithelium and exclusively in gustducin-positive cells. Expressed in the duodenum, antrum and fundus (part of the stomach).

The protein resides in the membrane. Functionally, gustducin-coupled receptor implicated in the perception of bitter compounds in the oral cavity and the gastrointestinal tract. Signals through PLCB2 and the calcium-regulated cation channel TRPM5. In Mus musculus (Mouse), this protein is Taste receptor type 2 member 123 (Tas2r123).